Here is a 188-residue protein sequence, read N- to C-terminus: Adenine phosphoribosyltransferase (188 aa).

Belongs to the purine/pyrimidine phosphoribosyltransferase family. As to quaternary structure, homodimer.

The protein resides in the cytoplasm. It carries out the reaction AMP + diphosphate = 5-phospho-alpha-D-ribose 1-diphosphate + adenine. Its pathway is purine metabolism; AMP biosynthesis via salvage pathway; AMP from adenine: step 1/1. Its function is as follows. Catalyzes a salvage reaction resulting in the formation of AMP, that is energically less costly than de novo synthesis. This Salinispora tropica (strain ATCC BAA-916 / DSM 44818 / JCM 13857 / NBRC 105044 / CNB-440) protein is Adenine phosphoribosyltransferase.